A 244-amino-acid polypeptide reads, in one-letter code: Chalcone--flavanone isomerase (244 aa).

3 residues coordinate substrate: Thr-45, Asn-110, and Ser-187.

The protein belongs to the chalcone isomerase family.

The catalysed reaction is a chalcone = a flavanone.. It participates in secondary metabolite biosynthesis; flavonoid biosynthesis. Its function is as follows. Catalyzes the intramolecular cyclization of bicyclic chalcones into tricyclic (S)-flavanones. Responsible for the isomerization of 4,2',4',6'-tetrahydroxychalcone (also termed chalcone) into naringenin. This chain is Chalcone--flavanone isomerase (CHI), found in Nicotiana tabacum (Common tobacco).